Consider the following 455-residue polypeptide: Catalase-like protein (455 aa).

The interval 1–25 is disordered; sequence MSQQDKKLTGVFGHPVSDRENSMTA.

Belongs to the catalase family.

Catalytically inactive. The chain is Catalase-like protein (katB) from Staphylococcus aureus.